A 109-amino-acid chain; its full sequence is Arminin 6560 (109 aa).

The signal sequence occupies residues 1–21 (MKCLFGFLFIMLVAFLQDVHG). The propeptide occupies 22–77 (VDSCIGKPCKVKGEDMKDIKEKKIEDIKEEIKNVKKEIFEDVDDELLDDNIRDDKI). Residue Ile106 is modified to Isoleucine amide.

This sequence belongs to the arminin family. Expressed in the ectodermal epithelium.

Its subcellular location is the secreted. It is found in the target cell membrane. Functionally, antimicrobial peptide with a broad-spectrum antimicrobial activity. Keeps its antibacterial activity under a wide range of salt concentrations that mimic physiological conditions of human blood, which is surprising, since Hydra is an obligate freshwater animal with nearly no salt tolerance. Does not affect red blood cells. The protein is Arminin 6560 of Hydra vulgaris (Hydra).